Reading from the N-terminus, the 280-residue chain is Protease HtpX (280 aa).

Helical transmembrane passes span T7–G26 and G30–S49. Residue H129 coordinates Zn(2+). Residue E130 is part of the active site. H133 provides a ligand contact to Zn(2+). The next 2 membrane-spanning stretches (helical) occupy residues A146–G166 and V178–I198. Residue E203 coordinates Zn(2+).

Belongs to the peptidase M48B family. Zn(2+) is required as a cofactor.

The protein localises to the cell inner membrane. The chain is Protease HtpX from Legionella pneumophila (strain Lens).